Consider the following 401-residue polypeptide: Chorismate synthase (401 aa).

Residues Arg40 and Arg46 each coordinate NADP(+). Residues 135–137, 256–257, Gly302, 317–321, and Arg343 each bind FMN; these read RAS, QA, and KPISS.

The protein belongs to the chorismate synthase family. In terms of assembly, homotetramer. FMNH2 serves as cofactor.

The catalysed reaction is 5-O-(1-carboxyvinyl)-3-phosphoshikimate = chorismate + phosphate. It participates in metabolic intermediate biosynthesis; chorismate biosynthesis; chorismate from D-erythrose 4-phosphate and phosphoenolpyruvate: step 7/7. In terms of biological role, catalyzes the anti-1,4-elimination of the C-3 phosphate and the C-6 proR hydrogen from 5-enolpyruvylshikimate-3-phosphate (EPSP) to yield chorismate, which is the branch point compound that serves as the starting substrate for the three terminal pathways of aromatic amino acid biosynthesis. This reaction introduces a second double bond into the aromatic ring system. The protein is Chorismate synthase of Saccharopolyspora erythraea (strain ATCC 11635 / DSM 40517 / JCM 4748 / NBRC 13426 / NCIMB 8594 / NRRL 2338).